Consider the following 563-residue polypeptide: Membrane protein insertase YidC (563 aa).

The helical transmembrane segment at threonine 6–histidine 26 threads the bilayer. The tract at residues proline 36–alanine 68 is disordered. The next 4 membrane-spanning stretches (helical) occupy residues tryptophan 373–alanine 393, leucine 443–valine 463, proline 482–proline 502, and valine 512–valine 532.

The protein belongs to the OXA1/ALB3/YidC family. Type 1 subfamily. Interacts with the Sec translocase complex via SecD. Specifically interacts with transmembrane segments of nascent integral membrane proteins during membrane integration.

Its subcellular location is the cell inner membrane. In terms of biological role, required for the insertion and/or proper folding and/or complex formation of integral membrane proteins into the membrane. Involved in integration of membrane proteins that insert both dependently and independently of the Sec translocase complex, as well as at least some lipoproteins. Aids folding of multispanning membrane proteins. The chain is Membrane protein insertase YidC from Bordetella petrii (strain ATCC BAA-461 / DSM 12804 / CCUG 43448).